Consider the following 255-residue polypeptide: uncharacterized protein (255 aa).

The protein belongs to the methyltransferase superfamily.

This is an uncharacterized protein from Mycolicibacterium paratuberculosis (strain ATCC BAA-968 / K-10) (Mycobacterium paratuberculosis).